Here is a 270-residue protein sequence, read N- to C-terminus: Tryptophan synthase alpha chain (270 aa).

Active-site proton acceptor residues include E49 and D60.

It belongs to the TrpA family. In terms of assembly, tetramer of two alpha and two beta chains.

The catalysed reaction is (1S,2R)-1-C-(indol-3-yl)glycerol 3-phosphate + L-serine = D-glyceraldehyde 3-phosphate + L-tryptophan + H2O. It functions in the pathway amino-acid biosynthesis; L-tryptophan biosynthesis; L-tryptophan from chorismate: step 5/5. Functionally, the alpha subunit is responsible for the aldol cleavage of indoleglycerol phosphate to indole and glyceraldehyde 3-phosphate. The chain is Tryptophan synthase alpha chain from Thermobifida fusca (strain YX).